The following is a 362-amino-acid chain: Protein mab-21-like 3 (362 aa).

It belongs to the mab-21 family.

This chain is Protein mab-21-like 3 (MAB21L3), found in Homo sapiens (Human).